We begin with the raw amino-acid sequence, 160 residues long: Probable chemoreceptor glutamine deamidase CheD 2 (160 aa).

This sequence belongs to the CheD family.

The enzyme catalyses L-glutaminyl-[protein] + H2O = L-glutamyl-[protein] + NH4(+). Its function is as follows. Probably deamidates glutamine residues to glutamate on methyl-accepting chemotaxis receptors (MCPs), playing an important role in chemotaxis. The sequence is that of Probable chemoreceptor glutamine deamidase CheD 2 from Geobacter sulfurreducens (strain ATCC 51573 / DSM 12127 / PCA).